The sequence spans 418 residues: Cell division protein FtsA (418 aa).

The protein belongs to the FtsA/MreB family. Self-interacts. Interacts with FtsZ.

It is found in the cell inner membrane. Its function is as follows. Cell division protein that is involved in the assembly of the Z ring. May serve as a membrane anchor for the Z ring. The sequence is that of Cell division protein FtsA from Buchnera aphidicola subsp. Schizaphis graminum (strain Sg).